Reading from the N-terminus, the 178-residue chain is Caveolin-1 (178 aa).

Serine 2 carries the N-acetylserine modification. Serine 2 is modified (phosphoserine). Residues 2-94 are required for homooligomerization; it reads SGGKYVDSEG…WKASFTTFTV (93 aa). At 2 to 104 the chain is on the cytoplasmic side; the sequence is SGGKYVDSEG…TKYWFYRLLS (103 aa). The residue at position 5 (lysine 5) is an N6-acetyllysine; alternate. Residue lysine 5 forms a Glycyl lysine isopeptide (Lys-Gly) (interchain with G-Cter in ubiquitin); alternate linkage. At tyrosine 6 the chain carries Phosphotyrosine. Position 9 is a phosphoserine (serine 9). The residue at position 14 (tyrosine 14) is a Phosphotyrosine; by ABL1. Position 25 is a phosphotyrosine (tyrosine 25). Glycyl lysine isopeptide (Lys-Gly) (interchain with G-Cter in ubiquitin) cross-links involve residues lysine 26, lysine 30, lysine 39, lysine 47, and lysine 57. Residues 82 to 94 form an interaction with CAVIN3 region; sequence DGIWKASFTTFTV. Positions 105 to 125 form an intramembrane region, helical; sequence ALFGIPMALIWGIYFAILSFL. At 126–178 the chain is on the cytoplasmic side; sequence HIWAVVPCIKSFLIEIQCISRVYSIYVHTFCDPLFEAIGKIFSNIRINMQKEI. The segment at 131 to 142 is interacts with SPRY1, SPRY2, SPRY3 and SPRY4; that stretch reads VPCIKSFLIEIQ. 3 S-palmitoyl cysteine lipidation sites follow: cysteine 133, cysteine 143, and cysteine 156. The interacts with SPRY1, SPRY2, and SPRY4 stretch occupies residues 149–160; it reads SIYVHTFCDPLF. The segment at 167–178 is interacts with SPRY1, SPRY2, SPRY3 and SPRY4; it reads FSNIRINMQKEI.

This sequence belongs to the caveolin family. In terms of assembly, homooligomer. Interacts with GLIPR2. Interacts with NOSTRIN. Interacts with SNAP25 and STX1A. Interacts (via the N-terminus) with DPP4; the interaction is direct. Interacts with CTNNB1, CDH1 and JUP. Interacts with PACSIN2; this interaction induces membrane tubulation. Interacts with SLC7A9. Interacts with BMX and BTK. Interacts with TGFBR1. Interacts with CAVIN3 (via leucine-zipper domain) in a cholesterol-sensitive manner. Interacts with CAVIN1. Interacts with EHD2 in a cholesterol-dependent manner. Forms a ternary complex with UBXN6 and VCP; mediates CAV1 targeting to lysosomes for degradation. Interacts with ABCG1; this interaction regulates ABCG1-mediated cholesterol efflux. Interacts with NEU3; this interaction enhances NEU3 sialidase activity within caveola. Interacts (via C-terminus) with SPRY1, SPRY2 (via C-terminus), SPRY3, and SPRY4. Interacts with IGFBP5; this interaction allows trafficking of IGFBP5 from the plasma membrane to the nucleus. Post-translationally, phosphorylated at Tyr-14 by ABL1 in response to oxidative stress. In terms of processing, ubiquitinated. Undergo monoubiquitination and multi- and/or polyubiquitination. Monoubiquitination of N-terminal lysines promotes integration in a ternary complex with UBXN6 and VCP which promotes oligomeric CAV1 targeting to lysosomes for degradation. Ubiquitinated by ZNRF1; leading to degradation and modulation of the TLR4-mediated immune response.

It localises to the golgi apparatus membrane. It is found in the cell membrane. The protein localises to the membrane. The protein resides in the caveola. Its subcellular location is the membrane raft. In terms of biological role, may act as a scaffolding protein within caveolar membranes. Forms a stable heterooligomeric complex with CAV2 that targets to lipid rafts and drives caveolae formation. Mediates the recruitment of CAVIN proteins (CAVIN1/2/3/4) to the caveolae. Interacts directly with G-protein alpha subunits and can functionally regulate their activity. Involved in the costimulatory signal essential for T-cell receptor (TCR)-mediated T-cell activation. Its binding to DPP4 induces T-cell proliferation and NF-kappa-B activation in a T-cell receptor/CD3-dependent manner. Recruits CTNNB1 to caveolar membranes and may regulate CTNNB1-mediated signaling through the Wnt pathway. Negatively regulates TGFB1-mediated activation of SMAD2/3 by mediating the internalization of TGFBR1 from membrane rafts leading to its subsequent degradation. Binds 20(S)-hydroxycholesterol (20(S)-OHC). This chain is Caveolin-1 (CAV1), found in Muntiacus muntjak (Barking deer).